The sequence spans 66 residues: Large ribosomal subunit protein bL31 (66 aa).

The Zn(2+) site is built by cysteine 16, cysteine 18, cysteine 36, and cysteine 39.

This sequence belongs to the bacterial ribosomal protein bL31 family. Type A subfamily. Part of the 50S ribosomal subunit. Zn(2+) serves as cofactor.

In terms of biological role, binds the 23S rRNA. This Priestia megaterium (Bacillus megaterium) protein is Large ribosomal subunit protein bL31.